The following is a 179-amino-acid chain: Putative 5'(3')-deoxyribonucleotidase (179 aa).

The active-site Nucleophile is the aspartate 9. The Mg(2+) site is built by aspartate 9, aspartate 11, and aspartate 135. Aspartate 11 serves as the catalytic Proton donor.

Belongs to the 5'(3')-deoxyribonucleotidase family. The cofactor is Mg(2+).

Functionally, dephosphorylates the 5' and 2'(3')-phosphates of deoxyribonucleotides. The protein is Putative 5'(3')-deoxyribonucleotidase of Staphylococcus epidermidis (strain ATCC 12228 / FDA PCI 1200).